The sequence spans 604 residues: Pescadillo homolog (604 aa).

The BRCT domain maps to 349 to 448 (PTSTLFSKFI…ELLPVNKYAP (100 aa)). Disordered stretches follow at residues 452–562 (LPPH…MTNK) and 579–604 (TRTQ…LSKK). Coiled coils occupy residues 468 to 522 (EAEK…LEAA) and 573 to 604 (GIDK…LSKK). Residues 476-510 (ENAEEEEEDEVDEDDEDADEDEEDEEEEDEEEDED) show a composition bias toward acidic residues. The span at 593 to 604 (KTKAQLDKLSKK) shows a compositional bias: basic and acidic residues.

This sequence belongs to the pescadillo family. Component of the NOP7 complex, composed of ERB1, NOP7 and YTM1. The complex is held together by ERB1, which interacts with NOP7 via its N-terminal domain and with YTM1 via a high-affinity interaction between the seven-bladed beta-propeller domains of the 2 proteins. The NOP7 complex associates with the 66S pre-ribosome.

The protein localises to the nucleus. Its subcellular location is the nucleolus. It localises to the nucleoplasm. In terms of biological role, component of the NOP7 complex, which is required for maturation of the 25S and 5.8S ribosomal RNAs and formation of the 60S ribosome. This Scheffersomyces stipitis (strain ATCC 58785 / CBS 6054 / NBRC 10063 / NRRL Y-11545) (Yeast) protein is Pescadillo homolog.